Reading from the N-terminus, the 567-residue chain is Proton-coupled zinc antiporter SLC30A9, mitochondrial (567 aa).

A run of 5 helical transmembrane segments spans residues 238 to 258 (VVMV…LAWI), 313 to 333 (GVGI…MGLL), 341 to 361 (LLWA…TLLV), 391 to 411 (VILL…TCMG), and 423 to 443 (SLGS…LIYT). Positions 461–465 (LTELL) match the LXXLL motif motif.

The protein belongs to the cation diffusion facilitator (CDF) transporter (TC 2.A.4) family. SLC30A subfamily. As to quaternary structure, interacts with GRIP1, ESR1, AR and CTNNB1.

It localises to the mitochondrion membrane. The protein localises to the nucleus. The protein resides in the endoplasmic reticulum. The catalysed reaction is Zn(2+)(in) + 2 H(+)(out) = Zn(2+)(out) + 2 H(+)(in). Its function is as follows. Acts as a zinc transporter involved in intracellular zinc homeostasis. Functions as a secondary coactivator for nuclear receptors by cooperating with p160 coactivators subtypes. Plays a role in transcriptional activation of Wnt-responsive genes. Functionally, mitochondrial proton-coupled zinc ion antiporter mediating the export of zinc from the mitochondria and involved in zinc homeostasis, zinc mobilization as well as mitochondrial morphology and health. In nucleus, functions as a secondary coactivator for nuclear receptors by cooperating with p160 coactivators subtypes. Plays a role in transcriptional activation of Wnt-responsive genes. The chain is Proton-coupled zinc antiporter SLC30A9, mitochondrial (Slc30a9) from Mus musculus (Mouse).